We begin with the raw amino-acid sequence, 299 residues long: Ribosomal protein L11 methyltransferase (299 aa).

S-adenosyl-L-methionine contacts are provided by Thr140, Gly161, Asp183, and Asn232.

This sequence belongs to the methyltransferase superfamily. PrmA family.

The protein resides in the cytoplasm. It catalyses the reaction L-lysyl-[protein] + 3 S-adenosyl-L-methionine = N(6),N(6),N(6)-trimethyl-L-lysyl-[protein] + 3 S-adenosyl-L-homocysteine + 3 H(+). Methylates ribosomal protein L11. This Synechococcus elongatus (strain ATCC 33912 / PCC 7942 / FACHB-805) (Anacystis nidulans R2) protein is Ribosomal protein L11 methyltransferase.